The chain runs to 250 residues: 3-deoxy-manno-octulosonate cytidylyltransferase (250 aa).

It belongs to the KdsB family.

The protein localises to the cytoplasm. The enzyme catalyses 3-deoxy-alpha-D-manno-oct-2-ulosonate + CTP = CMP-3-deoxy-beta-D-manno-octulosonate + diphosphate. It functions in the pathway nucleotide-sugar biosynthesis; CMP-3-deoxy-D-manno-octulosonate biosynthesis; CMP-3-deoxy-D-manno-octulosonate from 3-deoxy-D-manno-octulosonate and CTP: step 1/1. The protein operates within bacterial outer membrane biogenesis; lipopolysaccharide biosynthesis. Its function is as follows. Activates KDO (a required 8-carbon sugar) for incorporation into bacterial lipopolysaccharide in Gram-negative bacteria. This chain is 3-deoxy-manno-octulosonate cytidylyltransferase, found in Francisella tularensis subsp. holarctica (strain FTNF002-00 / FTA).